The sequence spans 358 residues: Methylthioribose-1-phosphate isomerase (358 aa).

Substrate-binding positions include 54–56 and Q205; that span reads CGA. The active-site Proton donor is D246. Residue 256-257 participates in substrate binding; that stretch reads NQ.

This sequence belongs to the eIF-2B alpha/beta/delta subunits family. MtnA subfamily.

It catalyses the reaction 5-(methylsulfanyl)-alpha-D-ribose 1-phosphate = 5-(methylsulfanyl)-D-ribulose 1-phosphate. The protein operates within amino-acid biosynthesis; L-methionine biosynthesis via salvage pathway; L-methionine from S-methyl-5-thio-alpha-D-ribose 1-phosphate: step 1/6. In terms of biological role, catalyzes the interconversion of methylthioribose-1-phosphate (MTR-1-P) into methylthioribulose-1-phosphate (MTRu-1-P). The protein is Methylthioribose-1-phosphate isomerase of Pseudomonas fluorescens (strain ATCC BAA-477 / NRRL B-23932 / Pf-5).